The sequence spans 265 residues: UPF0294 protein KPK_4510 (265 aa).

This sequence belongs to the UPF0294 family.

The protein resides in the cytoplasm. This Klebsiella pneumoniae (strain 342) protein is UPF0294 protein KPK_4510.